Here is a 152-residue protein sequence, read N- to C-terminus: Superoxide dismutase [Cu-Zn] 2 (152 aa).

Positions 45, 47, and 62 each coordinate Cu cation. An intrachain disulfide couples cysteine 56 to cysteine 145. Residues histidine 62, histidine 70, histidine 79, and aspartate 82 each coordinate Zn(2+). Cu cation is bound at residue histidine 119.

The protein belongs to the Cu-Zn superoxide dismutase family. Homodimer. The cofactor is Cu cation. Requires Zn(2+) as cofactor.

The protein resides in the cytoplasm. It carries out the reaction 2 superoxide + 2 H(+) = H2O2 + O2. Its function is as follows. Destroys radicals which are normally produced within the cells and which are toxic to biological systems. The protein is Superoxide dismutase [Cu-Zn] 2 (SODCC.5) of Solanum lycopersicum (Tomato).